The chain runs to 528 residues: MSYNNGNTYSKSYSRNNKRPLFGKRSPNPQSLARPPPPKRIRTDSGYQSNMDNISSHRVNSNDQPGHTKSRGNNNLSRYNDTSFQTSSRYQGSRYNNNNTSYENRPKSIKRDETKAEFLSHLPKGPKSVEKSRYNNSSNTSNDIKNGYHASKYYNHKGQEGRSVIAKKVPVSVLTQQRSTSVYLRIMQVGEGTYGKVYKAKNTNTEKLVALKKLRLQGEREGFPITSIREIKLLQSFDHPNVSTIKEIMVESQKTVYMIFEYADNDLSGLLLNKEVQISHSQCKHLFKQLLLGMEYLHDNKILHRDVKGSNILIDNQGNLKITDFGLARKMNSRADYTNRVITLWYRPPELLLGTTNYGTEVDMWGCGCLLVELFNKTAIFQGSNELEQIESIFKIMGTPTINSWPTLYDMPWFFMIMPQQTTKYVNNFSEKFKSVLPSSKCLQLAINLLCYDQTKRFSATEALQSDYFKEEPKPEPLVLDGLVSCHEYEVKLARKQKRPNILSTNTNNKGNGNSNNNNNNNNDDDDK.

Over residues 1–15 the composition is skewed to polar residues; it reads MSYNNGNTYSKSYSR. The segment at 1 to 148 is disordered; the sequence is MSYNNGNTYS…NTSNDIKNGY (148 aa). S14 is subject to Phosphoserine; by autocatalysis. The Nuclear localization signal motif lies at 37–44; that stretch reads PPKRIRTD. Over residues 45 to 103 the composition is skewed to polar residues; that stretch reads SGYQSNMDNISSHRVNSNDQPGHTKSRGNNNLSRYNDTSFQTSSRYQGSRYNNNNTSYE. Positions 104–118 are enriched in basic and acidic residues; that stretch reads NRPKSIKRDETKAEF. Polar residues predominate over residues 134 to 144; that stretch reads YNNSSNTSNDI. One can recognise a Protein kinase domain in the interval 183-469; that stretch reads YLRIMQVGEG…ATEALQSDYF (287 aa). Residues 189–197 and K212 contribute to the ATP site; that span reads VGEGTYGKV. Catalysis depends on D306, which acts as the Proton acceptor. Residue T338 is modified to Phosphothreonine. Positions 497–528 are disordered; the sequence is QKRPNILSTNTNNKGNGNSNNNNNNNNDDDDK. The segment covering 504 to 522 has biased composition (low complexity); that stretch reads STNTNNKGNGNSNNNNNNN.

This sequence belongs to the protein kinase superfamily. CMGC Ser/Thr protein kinase family. CDC2/CDKX subfamily. In terms of assembly, CTDK-I consists of three subunits, CTK1, CTK2 and CTK3 (also called alpha, beta and gamma). Interacts directly with the CTK2 and CTK3 subunits, this interaction is required for kinase activity. Interacts with RNA polymerase I. Interacts with SNF1, but only at low glucose concentrations. Interacts with translating ribosomes. In terms of processing, phosphorylated on Thr-338 by CAK1. Phosphorylation is essential for the elevated CTD Ser-2 phosphorylation and required to activate transcription of stationary-phase genes during the diauxic shift.

The protein resides in the nucleus. Its subcellular location is the nucleolus. The protein localises to the cytoplasm. It catalyses the reaction [DNA-directed RNA polymerase] + ATP = phospho-[DNA-directed RNA polymerase] + ADP + H(+). In terms of biological role, catalytic subunit of the CTDK-I complex, which hyperphosphorylates the C-terminal heptapeptide repeat domain (CTD) of the largest RNA polymerase II subunit. CTDK-I phosphorylates 'Ser-5' if the CTD substrate is not phosphorylated at 'Ser-5', but will phosphorylate 'Ser-2' of a CTD substrate if 'Ser-5' is already phosphorylated. CTDK-I is also more reactive toward substrates that are prephosphorylated at 'Ser-2' or 'Ser-5' compared with an unphosphorylated CTD substrate, therefore efficiently creating doubly phosphorylated CTD repeats. Involved in RNA polymerase II transcriptional elongation, and through PTI1, pre-mRNA 3'-end processing. Participates in both positive and negative regulation of CTD phosphorylation. Required for DNA damage induced transcription, including the expression of the RNR genes, and reprogramming of gene expression upon amino acid starvation. Required for SET2 mediated H3K36 methylation. Also regulates H3K4 methylation. Controls the maintenance of suppressive chromatin in the coding regions of genes by both promoting H3K36 methylation, which leads to histone deacetylation, and catalyzing phosphorylation of the CTD required to localize H3K4 chromatin modification specifically to the 5' ends of genes, thereby creating a boundary for H3K4 methylation that prevents a mark associated with transcriptional initiation from spreading into the bodies of genes. Involved in RNA polymerase I transcription. Involved in telomere maintenance. Acts together with SNF1 to induce GSY2 transcription in response to glucose limitation. Involved in the adaptation to alternative carbon sources, including galactose, glycerol and ethanol, but not raffinose. Required for the integrity of the rDNA locus. Functions in translation elongation by enhancing decoding fidelity. Needed for translational accuracy by phosphorylating RPS2. The protein is CTD kinase subunit alpha (CTK1) of Saccharomyces cerevisiae (strain ATCC 204508 / S288c) (Baker's yeast).